The following is a 305-amino-acid chain: Ribosomal RNA small subunit methyltransferase H (305 aa).

S-adenosyl-L-methionine is bound by residues Gly-33 to Tyr-35, Asp-51, Phe-82, Asp-96, and Gln-103.

This sequence belongs to the methyltransferase superfamily. RsmH family.

It localises to the cytoplasm. It catalyses the reaction cytidine(1402) in 16S rRNA + S-adenosyl-L-methionine = N(4)-methylcytidine(1402) in 16S rRNA + S-adenosyl-L-homocysteine + H(+). Specifically methylates the N4 position of cytidine in position 1402 (C1402) of 16S rRNA. In Rickettsia bellii (strain OSU 85-389), this protein is Ribosomal RNA small subunit methyltransferase H.